Consider the following 1008-residue polypeptide: Collagen, type I, alpha 1a (1008 aa).

A compositionally biased stretch (pro residues) spans 1-21; it reads SPAMPVPGPMGPMGPRGPPGS. The interval 1 to 920 is disordered; sequence SPAMPVPGPM…PQEKAPDPFR (920 aa). Residues 39–53 are compositionally biased toward basic and acidic residues; the sequence is NGEDGESGKPGRGGE. Over residues 92–117 the composition is skewed to low complexity; sequence TPGAMGPRGAAGAAGARGNDGAAGAA. Residues 119-132 show a composition bias toward pro residues; the sequence is PPGPTGPAGPPGFP. Gly residues predominate over residues 133–151; sequence GGPGAKGDAGAQGGRGPEG. Composition is skewed to low complexity over residues 152 to 195 and 204 to 230; these read PAGA…AGAP and SGPQ…APGV. A compositionally biased stretch (gly residues) spans 253–265; it reads GARGGPGGRGFPG. Low complexity-rich tracts occupy residues 339 to 354 and 410 to 422; these read VGAR…PGPK and LPGE…PAGA. Basic and acidic residues predominate over residues 423 to 435; that stretch reads RGDRGFPGERGAK. 3 stretches are compositionally biased toward low complexity: residues 437–456, 489–524, and 537–573; these read DAGA…QGMP, RGLT…ARGA, and AGFA…AGPT. The segment covering 604–617 has biased composition (pro residues); sequence PPGPSGNPGPPGPA. The span at 634–661 shows a compositional bias: low complexity; sequence PAGRPGELGAAGPPGPAGEKGSPGSEGA. Residues 696–709 are compositionally biased toward gly residues; the sequence is GEAGGPSGPGGERG. The span at 717 to 735 shows a compositional bias: low complexity; the sequence is PGLAGAPGEPGREGSPGNE. A compositionally biased stretch (pro residues) spans 761–771; the sequence is APGPPGAPGPV. Positions 785–806 are enriched in low complexity; it reads PAGPAGSAGPSGPRGPAGAPGL. Over residues 807-821 the composition is skewed to basic and acidic residues; it reads RGDKGESGEAGERRG. Positions 832-868 are enriched in low complexity; sequence SGSSGEQGPAGAAGPAGPRGPAGSAGSPGKDGMSGLP. The span at 884-896 shows a compositional bias: pro residues; that stretch reads AGPPGPPGPPGAP. The region spanning 978–1008 is the Fibrillar collagen NC1 domain; that stretch reads TSRLPLLDLAPMDVGAPDQEFGLEVGPVCFL.

Belongs to the fibrillar collagen family.

The protein resides in the secreted. It is found in the extracellular space. It localises to the extracellular matrix. The protein is Collagen, type I, alpha 1a of Epinephelus aeneus (White grouper).